A 267-amino-acid polypeptide reads, in one-letter code: DNA repair protein RecO (267 aa).

This sequence belongs to the RecO family.

Involved in DNA repair and RecF pathway recombination. The polypeptide is DNA repair protein RecO (Moorella thermoacetica (strain ATCC 39073 / JCM 9320)).